The following is a 722-amino-acid chain: Zinc finger BED domain-containing protein RICESLEEPER 1 (722 aa).

A BED-type zinc finger spans residues 66 to 126 (RKKSLVWEHF…GSCPKIKNQE (61 aa)). The Zn(2+) site is built by Cys-89, Cys-92, His-113, and Cys-119. The segment at 572-592 (VEQGGGNNAPASENSTQATAP) is disordered. Residues 580 to 592 (APASENSTQATAP) are compositionally biased toward polar residues. The tract at residues 617–702 (ELEQYLDESL…EALVCAKDWL (86 aa)) is HATC (Hobo-Ac-Tam3) domain.

Homodimer.

Its subcellular location is the nucleus. Its function is as follows. Transposase-like protein that is essential for plant growth and development. May regulate global gene expression by recruiting other cellular factors. The sequence is that of Zinc finger BED domain-containing protein RICESLEEPER 1 from Oryza sativa subsp. japonica (Rice).